We begin with the raw amino-acid sequence, 1156 residues long: Condensin-2 complex subunit G2 (1156 aa).

An HEAT repeat occupies 460 to 498 (MLPALKFCLHDNSEKVRVAFVDMLLKIKAVRAAKFWKIC). The interval 587–611 (PNEDTEDEDDDEGDGEGIVRGDSEK) is disordered. The span at 589 to 601 (EDTEDEDDDEGDG) shows a compositional bias: acidic residues.

As to quaternary structure, component of the condensin-2 complex, which contains the smc2 and smc4 heterodimer, and three non SMC subunits that probably regulate the complex: ncaph2, ncapd3 and ncapg2.

It is found in the nucleus. Its function is as follows. Regulatory subunit of the condensin-2 complex, a complex which establishes mitotic chromosome architecture and is involved in physical rigidity of the chromatid axis. The sequence is that of Condensin-2 complex subunit G2 (ncapg2) from Xenopus laevis (African clawed frog).